The following is a 486-amino-acid chain: NADH-quinone oxidoreductase subunit N (486 aa).

The next 14 helical transmembrane spans lie at 8–28 (FIALLPLLITSATLVVVMLAV), 38–58 (ATLSVIGLNLALLSLLPVLGV), 73–93 (ACFYMALVLVSALACVTLAHA), 105–125 (LYLLLLLATAGGLVLVSAQHL), 128–148 (LFIGLELLSVPVYGMVAYAFF), 169–189 (FLLFGMALLYAESGTLGFAGL), 196–216 (HVLSGPLVSVGVGMMLVGLGF), 235–255 (PAPVSAFLATASKVAVFAVLL), 269–289 (LLNISLSVIAVASILFGNLLA), 304–324 (IAHLGYLLVALIASKGMAVEA), 325–345 (VGVYLATYVLTSLGAFGVITL), 373–393 (AVMTVMMLSLAGIPLTAGFIG), 405–427 (HLWWLIGALVLGSAIGLYYYLRV), and 454–474 (IMLVAIALLAFFLGVYPQPLL).

The protein belongs to the complex I subunit 2 family. NDH-1 is composed of 13 different subunits. Subunits NuoA, H, J, K, L, M, N constitute the membrane sector of the complex.

It localises to the cell inner membrane. The enzyme catalyses a quinone + NADH + 5 H(+)(in) = a quinol + NAD(+) + 4 H(+)(out). Its function is as follows. NDH-1 shuttles electrons from NADH, via FMN and iron-sulfur (Fe-S) centers, to quinones in the respiratory chain. The immediate electron acceptor for the enzyme in this species is believed to be ubiquinone. Couples the redox reaction to proton translocation (for every two electrons transferred, four hydrogen ions are translocated across the cytoplasmic membrane), and thus conserves the redox energy in a proton gradient. This Pseudomonas aeruginosa (strain ATCC 15692 / DSM 22644 / CIP 104116 / JCM 14847 / LMG 12228 / 1C / PRS 101 / PAO1) protein is NADH-quinone oxidoreductase subunit N.